The chain runs to 336 residues: Transmembrane protein 120A (336 aa).

The Cytoplasmic portion of the chain corresponds to 1–131 (MNSPALQDCV…KQSKFAYKDE (131 aa)). Residue Lys-129 participates in CoA binding. A helical transmembrane segment spans residues 132-151 (YEKFKLYLTMILMVLSFICR). Residues 152–157 (FVLNSR) lie on the Extracellular side of the membrane. Residues 158–176 (VTDAVFNFLLVWYYCTLTI) traverse the membrane as a helical segment. Residues 177–189 (RESILINNGSRIK) are Cytoplasmic-facing. Residues Ser-186 and Arg-187 each coordinate CoA. Residues 190–208 (GWWVLNHYISTFLSGVMLT) traverse the membrane as a helical segment. At 209–217 (WPDGLMYQM) the chain is on the extracellular side. The chain crosses the membrane as a helical span at residues 218 to 239 (FRNQFLSFSMYQSFVQFLQYYY). CoA-binding residues include Gln-236, Tyr-239, and Gln-240. At 240-269 (QSGCLYRLRALGERHNMDLTVEGFQSWMWR) the chain is on the cytoplasmic side. The helical transmembrane segment at 270–293 (GLTFLLPFLFFGQFWQLYNAITLF) threads the bilayer. At 294-303 (KLARHPECKE) the chain is on the extracellular side. The chain crosses the membrane as a helical span at residues 304-329 (WQVIMCGLPFLVHFLGNFFTTLRVVH). Topologically, residues 330–336 (QKFQKQN) are cytoplasmic. Lys-331 contacts CoA.

Belongs to the TMEM120 family. In terms of assembly, homodimer.

It is found in the cell membrane. It localises to the nucleus inner membrane. The protein localises to the endoplasmic reticulum. Its function is as follows. Multifunctional protein involved in mechanosensation, and plays an essential role in lipid metabolism. May function as a potential ion channel involved in sensing mechanical stimuli. TMEM120A is structurally similar to a lipid-modifying enzyme, ELOVL7, and contains a bound coenzyme A molecule, which suggests it might function as an enzyme in lipid metabolism. This chain is Transmembrane protein 120A, found in Xenopus tropicalis (Western clawed frog).